A 145-amino-acid chain; its full sequence is Transcription factor MEE8 (145 aa).

A compositionally biased stretch (basic and acidic residues) spans 33 to 49 (EKGVEKVGQKRSAESRR). Positions 33 to 61 (EKGVEKVGQKRSAESRREGKKKRVKTQCV) are disordered. In terms of domain architecture, bHLH spans 66–115 (DKSDHDTLLKKKRRERIRRQLETLKEITPNCPQSDINAILDCVIEYTNNL).

In terms of assembly, homodimer.

Its subcellular location is the nucleus. Functionally, required during early embryo development, for the endosperm formation. The polypeptide is Transcription factor MEE8 (MEE8) (Arabidopsis thaliana (Mouse-ear cress)).